An 856-amino-acid chain; its full sequence is Translation initiation factor IF-2 (856 aa).

Disordered regions lie at residues 1-248 (MSDN…ARAR) and 254-273 (KRAREKDKRAHQAGTVQQKQ). The span at 22-38 (ETGQVKQSFSHGRSNTV) shows a compositional bias: polar residues. Over residues 83 to 93 (APRPAPAPIPT) the composition is skewed to pro residues. The span at 100–150 (LERREQQERLLREAEEARMAALEETRRREERAKAEATEEERRRAEENRRAE) shows a compositional bias: basic and acidic residues. Positions 156–196 (AAAAAAAAATAEAETAAAAPREEAPAAAGTAEEAPRTSSST) are enriched in low complexity. The span at 197 to 209 (MPPPRRFTPVPSP) shows a compositional bias: pro residues. Residues 210–229 (KRPEPPRPQQRDRKGDDRRQ) show a composition bias toward basic and acidic residues. Positions 356 to 526 (PRPPVVTIMG…ELQAELLELK (171 aa)) constitute a tr-type G domain. The segment at 365–372 (GHVDHGKT) is G1. 365-372 (GHVDHGKT) provides a ligand contact to GTP. A G2 region spans residues 390-394 (GITQH). Positions 412-415 (DTPG) are G3. GTP-binding positions include 412–416 (DTPGH) and 466–469 (NKMD). Residues 466 to 469 (NKMD) form a G4 region. The tract at residues 502-504 (SAL) is G5.

The protein belongs to the TRAFAC class translation factor GTPase superfamily. Classic translation factor GTPase family. IF-2 subfamily.

It localises to the cytoplasm. In terms of biological role, one of the essential components for the initiation of protein synthesis. Protects formylmethionyl-tRNA from spontaneous hydrolysis and promotes its binding to the 30S ribosomal subunits. Also involved in the hydrolysis of GTP during the formation of the 70S ribosomal complex. This Rhizorhabdus wittichii (strain DSM 6014 / CCUG 31198 / JCM 15750 / NBRC 105917 / EY 4224 / RW1) (Sphingomonas wittichii) protein is Translation initiation factor IF-2.